The primary structure comprises 358 residues: Probable isocitrate dehydrogenase [NAD] subunit alpha, mitochondrial (358 aa).

Substrate is bound by residues arginine 108, arginine 118, arginine 139, and aspartate 226. Residues aspartate 226, aspartate 250, and aspartate 254 each coordinate Mg(2+).

Belongs to the isocitrate and isopropylmalate dehydrogenases family. As to quaternary structure, heterooligomer of subunits alpha, beta, and gamma in the apparent ratio of 2:1:1. Requires Mg(2+) as cofactor. The cofactor is Mn(2+).

Its subcellular location is the mitochondrion. It carries out the reaction D-threo-isocitrate + NAD(+) = 2-oxoglutarate + CO2 + NADH. The protein is Probable isocitrate dehydrogenase [NAD] subunit alpha, mitochondrial (idha-1) of Caenorhabditis elegans.